The following is a 233-amino-acid chain: Ribonuclease HII (233 aa).

An RNase H type-2 domain is found at 26-215 (QLVAGIDEVG…VRASEGEGLE (190 aa)). Residues D32, E33, and D124 each coordinate a divalent metal cation. Residues 211–233 (GEGLETAAGRQSSEGKKGRRPRG) form a disordered region.

This sequence belongs to the RNase HII family. Requires Mn(2+) as cofactor. Mg(2+) is required as a cofactor.

The protein localises to the cytoplasm. The enzyme catalyses Endonucleolytic cleavage to 5'-phosphomonoester.. In terms of biological role, endonuclease that specifically degrades the RNA of RNA-DNA hybrids. The polypeptide is Ribonuclease HII (Syntrophobacter fumaroxidans (strain DSM 10017 / MPOB)).